The primary structure comprises 208 residues: Uracil phosphoribosyltransferase (208 aa).

5-phospho-alpha-D-ribose 1-diphosphate contacts are provided by residues Arg78, Arg103, and 130–138 (DPMLATGGS). Residues Ile193 and 198-200 (GDA) contribute to the uracil site. Asp199 is a binding site for 5-phospho-alpha-D-ribose 1-diphosphate.

The protein belongs to the UPRTase family. It depends on Mg(2+) as a cofactor.

The catalysed reaction is UMP + diphosphate = 5-phospho-alpha-D-ribose 1-diphosphate + uracil. The protein operates within pyrimidine metabolism; UMP biosynthesis via salvage pathway; UMP from uracil: step 1/1. Allosterically activated by GTP. In terms of biological role, catalyzes the conversion of uracil and 5-phospho-alpha-D-ribose 1-diphosphate (PRPP) to UMP and diphosphate. In Aliivibrio fischeri (strain MJ11) (Vibrio fischeri), this protein is Uracil phosphoribosyltransferase.